A 597-amino-acid chain; its full sequence is Elongation factor 4 (597 aa).

Residues Gln-2 to Lys-184 enclose the tr-type G domain. GTP is bound by residues Asp-14–Thr-19 and Asn-131–Asp-134.

The protein belongs to the TRAFAC class translation factor GTPase superfamily. Classic translation factor GTPase family. LepA subfamily.

Its subcellular location is the cell inner membrane. The catalysed reaction is GTP + H2O = GDP + phosphate + H(+). Required for accurate and efficient protein synthesis under certain stress conditions. May act as a fidelity factor of the translation reaction, by catalyzing a one-codon backward translocation of tRNAs on improperly translocated ribosomes. Back-translocation proceeds from a post-translocation (POST) complex to a pre-translocation (PRE) complex, thus giving elongation factor G a second chance to translocate the tRNAs correctly. Binds to ribosomes in a GTP-dependent manner. The chain is Elongation factor 4 from Bordetella bronchiseptica (strain ATCC BAA-588 / NCTC 13252 / RB50) (Alcaligenes bronchisepticus).